A 208-amino-acid polypeptide reads, in one-letter code: Transmembrane emp24 domain-containing protein p24beta2 (208 aa).

The signal sequence occupies residues 1-21 (MSLKGTIVLLGLLWSFQATLG). Over 22-176 (IRFVIDREEC…ENMSKRAVHK (155 aa)) the chain is Lumenal. The GOLD domain occupies 29-116 (EECFSHKAEY…HETIDFDVQL (88 aa)). Residues 134-149 (LMEQISKLEEALYNIQ) adopt a coiled-coil conformation. An N-linked (GlcNAc...) asparagine glycan is attached at Asn168. The chain crosses the membrane as a helical span at residues 177-195 (ALFESFALIGASFLQVYLL). The Cytoplasmic segment spans residues 196–208 (RRLFERKLGMSRV). The COPII vesicle coat-binding motif lies at 198–199 (LF). Positions 198–208 (LFERKLGMSRV) match the COPI vesicle coat-binding motif. The Required for the export from the endoplasmic reticulum to the Golgi motif lies at 207–208 (RV).

Belongs to the EMP24/GP25L family. In terms of assembly, probably oligomerizes with other members of the EMP24/GP25L family. Associates with the COPI vesicle coat (coatomer). Associates with the COPII vesicle coat (coatomer). Interacts with p24delta5.

It localises to the golgi apparatus. The protein resides in the cis-Golgi network membrane. The protein localises to the golgi stack membrane. In terms of biological role, involved in vesicular protein trafficking. Mainly functions in the early secretory pathway but also in post-Golgi membranes. Thought to act as cargo receptor at the lumenal side for incorporation of secretory cargo molecules into transport vesicles and to be involved in vesicle coat formation at the cytoplasmic side. Interacts with p24delta5 at endoplasmic reticulum export sites for endoplasmic reticulum exit and coupled transport to the Golgi apparatus. The polypeptide is Transmembrane emp24 domain-containing protein p24beta2 (Arabidopsis thaliana (Mouse-ear cress)).